Reading from the N-terminus, the 606-residue chain is NADH-ubiquinone oxidoreductase chain 5 (606 aa).

Transmembrane regions (helical) follow at residues 4–24 (FPSL…TTTI), 38–58 (NIIS…IHSG), 87–107 (MIFV…SMWY), 114–134 (ITQF…LVTA), 140–160 (LFIG…WWYG), 171–191 (AILY…WFLF), 213–233 (LMGL…HPWL), 241–261 (TPVS…FLLI), 273–293 (VQTF…ICAL), 301–320 (IIAF…IGIN), 325–347 (AFLH…GSII), 366–386 (MPFT…MPFL), 409–429 (LLIT…MIFF), 457–477 (LLIG…PTTI), 488–508 (LTAL…SLAT), and 583–603 (LIKL…LLLM).

The protein belongs to the complex I subunit 5 family. Core subunit of respiratory chain NADH dehydrogenase (Complex I) which is composed of 45 different subunits.

It localises to the mitochondrion inner membrane. The catalysed reaction is a ubiquinone + NADH + 5 H(+)(in) = a ubiquinol + NAD(+) + 4 H(+)(out). Its function is as follows. Core subunit of the mitochondrial membrane respiratory chain NADH dehydrogenase (Complex I) which catalyzes electron transfer from NADH through the respiratory chain, using ubiquinone as an electron acceptor. Essential for the catalytic activity and assembly of complex I. In Ceratotherium simum (White rhinoceros), this protein is NADH-ubiquinone oxidoreductase chain 5 (MT-ND5).